The chain runs to 104 residues: L-rhamnose mutarotase (104 aa).

Tyrosine 18 is a substrate binding site. The Proton donor role is filled by histidine 22. Substrate is bound by residues tyrosine 41 and 76 to 77; that span reads WW.

Belongs to the rhamnose mutarotase family. In terms of assembly, homodimer.

The protein resides in the cytoplasm. The enzyme catalyses alpha-L-rhamnose = beta-L-rhamnose. It functions in the pathway carbohydrate metabolism; L-rhamnose metabolism. Involved in the anomeric conversion of L-rhamnose. The chain is L-rhamnose mutarotase from Mannheimia succiniciproducens (strain KCTC 0769BP / MBEL55E).